The primary structure comprises 188 residues: Protein-export protein SecB (188 aa).

Disordered regions lie at residues 1–21 (MADE…EQPK) and 160–188 (RQKA…DTQQ). The segment covering 176–188 (SDSTAAQGSDTQQ) has biased composition (polar residues).

The protein belongs to the SecB family. In terms of assembly, homotetramer, a dimer of dimers. One homotetramer interacts with 1 SecA dimer.

It is found in the cytoplasm. Its function is as follows. One of the proteins required for the normal export of preproteins out of the cell cytoplasm. It is a molecular chaperone that binds to a subset of precursor proteins, maintaining them in a translocation-competent state. It also specifically binds to its receptor SecA. The polypeptide is Protein-export protein SecB (Alkalilimnicola ehrlichii (strain ATCC BAA-1101 / DSM 17681 / MLHE-1)).